The following is a 328-amino-acid chain: UPF0285 protein MJ1370 (328 aa).

It belongs to the UPF0285 family.

The chain is UPF0285 protein MJ1370 from Methanocaldococcus jannaschii (strain ATCC 43067 / DSM 2661 / JAL-1 / JCM 10045 / NBRC 100440) (Methanococcus jannaschii).